Reading from the N-terminus, the 458-residue chain is NADH-quinone oxidoreductase subunit N 1 (458 aa).

The next 14 membrane-spanning stretches (helical) occupy residues 12 to 32 (ALIPEITLTGFASLILLAGLL), 37 to 57 (EVLVWSSVLFLVIFAFFIPSF), 70 to 90 (FLTIYLKLIIIIGTIISLLVL), 101 to 121 (FNESIAFILFSALGMMLLVSA), 124 to 144 (LISFFLSFELMSLSIYVLVGI), 159 to 179 (FMLGGFSSAIMLFGIAFIYGA), 199 to 219 (ILIGLGLFIVGLCFKIALVPF), 230 to 250 (APTPVTAFISTLPKVAILGAF), 266 to 286 (SNFLIVLSIATMATGNFFALI), 293 to 313 (MLAYSSIAHAGYIIIGVIVGT), 321 to 341 (VAYMFIYTLMNIGAFAMVIAF), 361 to 381 (IAMLIFMFSLTGVPPTAGFIV), 393 to 413 (GFTWLVVIAVIFTVISAYYYL), and 438 to 458 (VAILICTIGVTFLGILPLFLI).

It belongs to the complex I subunit 2 family. In terms of assembly, NDH-1 is composed of 14 different subunits. Subunits NuoA, H, J, K, L, M, N constitute the membrane sector of the complex.

The protein localises to the cell inner membrane. The catalysed reaction is a quinone + NADH + 5 H(+)(in) = a quinol + NAD(+) + 4 H(+)(out). Its function is as follows. NDH-1 shuttles electrons from NADH, via FMN and iron-sulfur (Fe-S) centers, to quinones in the respiratory chain. The immediate electron acceptor for the enzyme in this species is believed to be ubiquinone. Couples the redox reaction to proton translocation (for every two electrons transferred, four hydrogen ions are translocated across the cytoplasmic membrane), and thus conserves the redox energy in a proton gradient. This Thermodesulfovibrio yellowstonii (strain ATCC 51303 / DSM 11347 / YP87) protein is NADH-quinone oxidoreductase subunit N 1.